The following is a 157-amino-acid chain: SsrA-binding protein (157 aa).

It belongs to the SmpB family.

The protein resides in the cytoplasm. Functionally, required for rescue of stalled ribosomes mediated by trans-translation. Binds to transfer-messenger RNA (tmRNA), required for stable association of tmRNA with ribosomes. tmRNA and SmpB together mimic tRNA shape, replacing the anticodon stem-loop with SmpB. tmRNA is encoded by the ssrA gene; the 2 termini fold to resemble tRNA(Ala) and it encodes a 'tag peptide', a short internal open reading frame. During trans-translation Ala-aminoacylated tmRNA acts like a tRNA, entering the A-site of stalled ribosomes, displacing the stalled mRNA. The ribosome then switches to translate the ORF on the tmRNA; the nascent peptide is terminated with the 'tag peptide' encoded by the tmRNA and targeted for degradation. The ribosome is freed to recommence translation, which seems to be the essential function of trans-translation. The polypeptide is SsrA-binding protein (Levilactobacillus brevis (strain ATCC 367 / BCRC 12310 / CIP 105137 / JCM 1170 / LMG 11437 / NCIMB 947 / NCTC 947) (Lactobacillus brevis)).